The primary structure comprises 385 residues: Probable peptidoglycan glycosyltransferase FtsW (385 aa).

The next 9 membrane-spanning stretches (helical) occupy residues 18–38 (LLWT…SASL), 57–77 (IYLA…PLAL), 81–101 (LRFV…IPGL), 111–131 (WIAL…CFVL), 157–177 (LLGV…VVVL), 195–215 (FLLI…AEPY), 280–300 (LGLL…WRVF), 311–331 (LLYH…QAFI), and 347–367 (LPFI…VGLI).

This sequence belongs to the SEDS family. FtsW subfamily.

The protein resides in the cell inner membrane. It catalyses the reaction [GlcNAc-(1-&gt;4)-Mur2Ac(oyl-L-Ala-gamma-D-Glu-L-Lys-D-Ala-D-Ala)](n)-di-trans,octa-cis-undecaprenyl diphosphate + beta-D-GlcNAc-(1-&gt;4)-Mur2Ac(oyl-L-Ala-gamma-D-Glu-L-Lys-D-Ala-D-Ala)-di-trans,octa-cis-undecaprenyl diphosphate = [GlcNAc-(1-&gt;4)-Mur2Ac(oyl-L-Ala-gamma-D-Glu-L-Lys-D-Ala-D-Ala)](n+1)-di-trans,octa-cis-undecaprenyl diphosphate + di-trans,octa-cis-undecaprenyl diphosphate + H(+). It participates in cell wall biogenesis; peptidoglycan biosynthesis. Functionally, peptidoglycan polymerase that is essential for cell division. The chain is Probable peptidoglycan glycosyltransferase FtsW from Alcanivorax borkumensis (strain ATCC 700651 / DSM 11573 / NCIMB 13689 / SK2).